Consider the following 393-residue polypeptide: Short-chain dehydrogenase/reductase family 42E member 1 (393 aa).

Residue Tyr152 is the Proton acceptor of the active site. Lys156 provides a ligand contact to NAD(+). Transmembrane regions (helical) follow at residues 282 to 302 and 371 to 391; these read LPLT…FILG and GLVI…SVIL.

The protein belongs to the 3-beta-HSD family.

Its subcellular location is the membrane. The chain is Short-chain dehydrogenase/reductase family 42E member 1 (SDR42E1) from Bos taurus (Bovine).